A 214-amino-acid chain; its full sequence is Phosphatidylserine decarboxylase proenzyme (214 aa).

Serine 182 serves as the catalytic Schiff-base intermediate with substrate; via pyruvic acid. Serine 182 carries the pyruvic acid (Ser); by autocatalysis modification.

Belongs to the phosphatidylserine decarboxylase family. PSD-A subfamily. As to quaternary structure, heterodimer of a large membrane-associated beta subunit and a small pyruvoyl-containing alpha subunit. Requires pyruvate as cofactor. Post-translationally, is synthesized initially as an inactive proenzyme. Formation of the active enzyme involves a self-maturation process in which the active site pyruvoyl group is generated from an internal serine residue via an autocatalytic post-translational modification. Two non-identical subunits are generated from the proenzyme in this reaction, and the pyruvate is formed at the N-terminus of the alpha chain, which is derived from the carboxyl end of the proenzyme. The post-translation cleavage follows an unusual pathway, termed non-hydrolytic serinolysis, in which the side chain hydroxyl group of the serine supplies its oxygen atom to form the C-terminus of the beta chain, while the remainder of the serine residue undergoes an oxidative deamination to produce ammonia and the pyruvoyl prosthetic group on the alpha chain.

It is found in the cell membrane. The catalysed reaction is a 1,2-diacyl-sn-glycero-3-phospho-L-serine + H(+) = a 1,2-diacyl-sn-glycero-3-phosphoethanolamine + CO2. The protein operates within phospholipid metabolism; phosphatidylethanolamine biosynthesis; phosphatidylethanolamine from CDP-diacylglycerol: step 2/2. Catalyzes the formation of phosphatidylethanolamine (PtdEtn) from phosphatidylserine (PtdSer). In Burkholderia multivorans (strain ATCC 17616 / 249), this protein is Phosphatidylserine decarboxylase proenzyme.